The chain runs to 221 residues: MSETAPLAPTIPAPAEKTPVKKKAKKAGATAGKRKASGPPVSELITKAVAASKERSGVSLAALKKALAAAGYDVEKNNSRIKLGLKSLVSKGTLVQTKGTGASGSFKLNKKAASGEGKPKAKKAGAAKPRKPAGAAKKPKKVAGAATPKKSIKKTPKKVKKPATAAGTKKVAKSAKKVKTPQPKKAAKSPAKAKAPKPKAAKPKSGKPKVTKAKKAAPKKK.

The segment covering 1–17 has biased composition (low complexity); the sequence is MSETAPLAPTIPAPAEK. The tract at residues 1 to 43 is disordered; that stretch reads MSETAPLAPTIPAPAEKTPVKKKAKKAGATAGKRKASGPPVSE. The residue at position 2 (S2) is an N-acetylserine. S2 is modified (phosphoserine). K17 carries the post-translational modification N6-acetyllysine. T18 is subject to Phosphothreonine. The span at 20 to 36 shows a compositional bias: basic residues; that stretch reads VKKKAKKAGATAGKRKA. N6-(beta-hydroxybutyryl)lysine is present on residues K35, K47, and K53. The region spanning 37 to 110 is the H15 domain; it reads SGPPVSELIT…GASGSFKLNK (74 aa). A Citrulline modification is found at R55. N6-(beta-hydroxybutyryl)lysine occurs at positions 65, 76, 86, and 91. The segment at 90–221 is disordered; that stretch reads SKGTLVQTKG…KAKKAAPKKK (132 aa). A Phosphoserine; by PKC modification is found at S105. The residue at position 107 (K107) is an N6-(beta-hydroxybutyryl)lysine. Composition is skewed to basic residues over residues 120-141, 150-161, and 170-179; these read KAKK…KPKK, KSIKKTPKKVKK, and KVAKSAKKVK. K170 is subject to N6-(beta-hydroxybutyryl)lysine. The segment covering 180-193 has biased composition (low complexity); sequence TPQPKKAAKSPAKA. Residues 194 to 221 are compositionally biased toward basic residues; it reads KAPKPKAAKPKSGKPKVTKAKKAAPKKK.

Belongs to the histone H1/H5 family. Post-translationally, H1 histones are progressively phosphorylated during the cell cycle, becoming maximally phosphorylated during late G2 phase and M phase, and being dephosphorylated sharply thereafter. Citrullination at Arg-55 (H1R54ci) by PADI4 takes place within the DNA-binding site of H1 and results in its displacement from chromatin and global chromatin decondensation, thereby promoting pluripotency and stem cell maintenance.

It localises to the nucleus. The protein resides in the chromosome. In terms of biological role, histone H1 protein binds to linker DNA between nucleosomes forming the macromolecular structure known as the chromatin fiber. Histones H1 are necessary for the condensation of nucleosome chains into higher-order structured fibers. Also acts as a regulator of individual gene transcription through chromatin remodeling, nucleosome spacing and DNA methylation. In Homo sapiens (Human), this protein is Histone H1.3.